Reading from the N-terminus, the 309-residue chain is CDK-activating kinase assembly factor MAT1 (309 aa).

N-acetylmethionine is present on methionine 1. The RING-type zinc-finger motif lies at 6-50; that stretch reads CPRCKTTKYRNPSLKLMVNVCGHTLCESCVDLLFVRGAGNCPECG. Position 51 is a phosphothreonine (threonine 51). The 20-residue stretch at 142-161 folds into the UIM domain; it reads REQEELEEALEVERQEHEQR. Residue serine 279 is modified to Phosphoserine.

Associates primarily with CDK7 and cyclin H to form the CAK complex. CAK can further associate with the core-TFIIH to form the TFIIH basal transcription factor.

It is found in the nucleus. In terms of biological role, stabilizes the cyclin H-CDK7 complex to form a functional CDK-activating kinase (CAK) enzymatic complex. CAK activates the cyclin-associated kinases CDK1, CDK2, CDK4 and CDK6 by threonine phosphorylation. CAK complexed to the core-TFIIH basal transcription factor activates RNA polymerase II by serine phosphorylation of the repetitive C-terminal domain (CTD) of its large subunit (POLR2A), allowing its escape from the promoter and elongation of the transcripts. Involved in cell cycle control and in RNA transcription by RNA polymerase II. This is CDK-activating kinase assembly factor MAT1 (Mnat1) from Mus musculus (Mouse).